A 641-amino-acid polypeptide reads, in one-letter code: Probable potassium transport system protein Kup (641 aa).

12 helical membrane-spanning segments follow: residues I29–I49, I66–L86, W119–T139, P156–F176, G185–I205, L231–Y251, W266–L286, A298–I318, I356–F376, A384–V404, V415–M435, and L438–T458.

It belongs to the HAK/KUP transporter (TC 2.A.72) family.

It is found in the cell inner membrane. The enzyme catalyses K(+)(in) + H(+)(in) = K(+)(out) + H(+)(out). Functionally, transport of potassium into the cell. Likely operates as a K(+):H(+) symporter. In Chlorobium phaeovibrioides (strain DSM 265 / 1930) (Prosthecochloris vibrioformis (strain DSM 265)), this protein is Probable potassium transport system protein Kup.